The primary structure comprises 185 residues: Intraflagellar transport protein 22 homolog (185 aa).

GTP contacts are provided by residues 10–17, 63–67, and 123–126; these read GPCESGKT, DCGGD, and HKPG. Serine 137 is modified (phosphoserine).

This sequence belongs to the small GTPase superfamily. Rab family. In terms of assembly, component of the IFT complex B, at least composed of IFT20, IFT22, IFT25, IFT27, IFT46, IFT52, TRAF3IP1/IFT54, IFT57, IFT74, IFT80, IFT81, and IFT88. Interacts with IFT88. Interacts with CFAP61.

The protein localises to the cell projection. It localises to the cilium. In terms of biological role, small GTPase-like component of the intraflagellar transport (IFT) complex B. This is Intraflagellar transport protein 22 homolog (IFT22) from Macaca fascicularis (Crab-eating macaque).